The primary structure comprises 94 residues: Evasin P1172 (94 aa).

3 cysteine pairs are disulfide-bonded: Cys-35-Cys-54, Cys-39-Cys-56, and Cys-50-Cys-67. N-linked (GlcNAc...) asparagine glycosylation is found at Asn-38, Asn-44, Asn-53, and Asn-80.

It localises to the secreted. Functionally, salivary chemokine-binding protein which binds to host chemokines CXCL1, CXCL2, CXCL5 and CXCL8. The polypeptide is Evasin P1172 (Ixodes ricinus (Common tick)).